The primary structure comprises 272 residues: 2-dehydro-3-deoxyphosphooctonate aldolase (272 aa).

Belongs to the KdsA family.

The protein localises to the cytoplasm. It carries out the reaction D-arabinose 5-phosphate + phosphoenolpyruvate + H2O = 3-deoxy-alpha-D-manno-2-octulosonate-8-phosphate + phosphate. It functions in the pathway carbohydrate biosynthesis; 3-deoxy-D-manno-octulosonate biosynthesis; 3-deoxy-D-manno-octulosonate from D-ribulose 5-phosphate: step 2/3. Its pathway is bacterial outer membrane biogenesis; lipopolysaccharide biosynthesis. In Pelobacter propionicus (strain DSM 2379 / NBRC 103807 / OttBd1), this protein is 2-dehydro-3-deoxyphosphooctonate aldolase.